We begin with the raw amino-acid sequence, 263 residues long: tRNA1(Val) (adenine(37)-N6)-methyltransferase (263 aa).

This sequence belongs to the methyltransferase superfamily. tRNA (adenine-N(6)-)-methyltransferase family.

The protein resides in the cytoplasm. The enzyme catalyses adenosine(37) in tRNA1(Val) + S-adenosyl-L-methionine = N(6)-methyladenosine(37) in tRNA1(Val) + S-adenosyl-L-homocysteine + H(+). Its function is as follows. Specifically methylates the adenine in position 37 of tRNA(1)(Val) (anticodon cmo5UAC). The sequence is that of tRNA1(Val) (adenine(37)-N6)-methyltransferase from Pseudoalteromonas atlantica (strain T6c / ATCC BAA-1087).